The primary structure comprises 93 residues: Alpha-defensin 3 (93 aa).

The signal sequence occupies residues 1–16 (MKTLVLLSALVLLAFQ). The propeptide occupies 17-58 (VQADPIQNTDEETKTEEQPGEDDQAVSVSFGDPEGSSLQEES). Residues 22 to 56 (IQNTDEETKTEEQPGEDDQAVSVSFGDPEGSSLQE) form a disordered region. 3 disulfides stabilise this stretch: Cys-64–Cys-92, Cys-66–Cys-81, and Cys-71–Cys-91.

It belongs to the alpha-defensin family. In terms of tissue distribution, paneth cells of the small bowel.

Its subcellular location is the secreted. Functionally, probably contributes to the antimicrobial barrier function of the small bowel mucosa. The chain is Alpha-defensin 3 (Defa3) from Mus musculus (Mouse).